We begin with the raw amino-acid sequence, 253 residues long: MLAKRIIPCLDVTGGRVVKGVNFVELRDAGDPVEIAARYNEQGADELTFLDITATSDGRDLILPIIEAVASQVFIPLTVGGGVRSVEDVRRLLNAGADKVSFNSAAVANPQLIRDASDKYGAQCIVVAIDAKARVGGEGWEVYTHGGRRNTGLDAVAWAQQMAEFGAGEILLTSMDRDGTQIGFNLPLTRAVSDAVPVPVIASGGVGALEHLAEGIQVGGADAVLAASIFHYGTFTVGQAKALMAEHGIPVRM.

Catalysis depends on residues D11 and D130.

Belongs to the HisA/HisF family. As to quaternary structure, heterodimer of HisH and HisF.

It localises to the cytoplasm. It carries out the reaction 5-[(5-phospho-1-deoxy-D-ribulos-1-ylimino)methylamino]-1-(5-phospho-beta-D-ribosyl)imidazole-4-carboxamide + L-glutamine = D-erythro-1-(imidazol-4-yl)glycerol 3-phosphate + 5-amino-1-(5-phospho-beta-D-ribosyl)imidazole-4-carboxamide + L-glutamate + H(+). Its pathway is amino-acid biosynthesis; L-histidine biosynthesis; L-histidine from 5-phospho-alpha-D-ribose 1-diphosphate: step 5/9. In terms of biological role, IGPS catalyzes the conversion of PRFAR and glutamine to IGP, AICAR and glutamate. The HisF subunit catalyzes the cyclization activity that produces IGP and AICAR from PRFAR using the ammonia provided by the HisH subunit. In Methylibium petroleiphilum (strain ATCC BAA-1232 / LMG 22953 / PM1), this protein is Imidazole glycerol phosphate synthase subunit HisF.